A 499-amino-acid polypeptide reads, in one-letter code: Aspartyl/glutamyl-tRNA(Asn/Gln) amidotransferase subunit B (499 aa).

This sequence belongs to the GatB/GatE family. GatB subfamily. As to quaternary structure, heterotrimer of A, B and C subunits.

It carries out the reaction L-glutamyl-tRNA(Gln) + L-glutamine + ATP + H2O = L-glutaminyl-tRNA(Gln) + L-glutamate + ADP + phosphate + H(+). The enzyme catalyses L-aspartyl-tRNA(Asn) + L-glutamine + ATP + H2O = L-asparaginyl-tRNA(Asn) + L-glutamate + ADP + phosphate + 2 H(+). Its function is as follows. Allows the formation of correctly charged Asn-tRNA(Asn) or Gln-tRNA(Gln) through the transamidation of misacylated Asp-tRNA(Asn) or Glu-tRNA(Gln) in organisms which lack either or both of asparaginyl-tRNA or glutaminyl-tRNA synthetases. The reaction takes place in the presence of glutamine and ATP through an activated phospho-Asp-tRNA(Asn) or phospho-Glu-tRNA(Gln). The chain is Aspartyl/glutamyl-tRNA(Asn/Gln) amidotransferase subunit B from Bartonella quintana (strain Toulouse) (Rochalimaea quintana).